The sequence spans 115 residues: Toxin-like structure LSTX-D1 (115 aa).

An N-terminal signal peptide occupies residues 1 to 22 (MKVLVLFSVLFLTLFSYSSTEA). Positions 23–44 (IDEFDSDAEEDMLSLMANEQVR) are excised as a propeptide. Cystine bridges form between cysteine 48-cysteine 63, cysteine 55-cysteine 72, cysteine 62-cysteine 87, and cysteine 74-cysteine 85.

The protein belongs to the neurotoxin 19 (CSTX) family. 01 subfamily. Expressed by the venom gland.

It localises to the secreted. The protein is Toxin-like structure LSTX-D1 of Lycosa singoriensis (Wolf spider).